The sequence spans 205 residues: Imidazole glycerol phosphate synthase subunit HisH (205 aa).

Residues 1-205 (MIALVDYGGG…FFKMALGDKK (205 aa)) form the Glutamine amidotransferase type-1 domain. C79 (nucleophile) is an active-site residue. Active-site residues include H181 and E183.

As to quaternary structure, heterodimer of HisH and HisF.

It is found in the cytoplasm. It catalyses the reaction 5-[(5-phospho-1-deoxy-D-ribulos-1-ylimino)methylamino]-1-(5-phospho-beta-D-ribosyl)imidazole-4-carboxamide + L-glutamine = D-erythro-1-(imidazol-4-yl)glycerol 3-phosphate + 5-amino-1-(5-phospho-beta-D-ribosyl)imidazole-4-carboxamide + L-glutamate + H(+). The enzyme catalyses L-glutamine + H2O = L-glutamate + NH4(+). The protein operates within amino-acid biosynthesis; L-histidine biosynthesis; L-histidine from 5-phospho-alpha-D-ribose 1-diphosphate: step 5/9. IGPS catalyzes the conversion of PRFAR and glutamine to IGP, AICAR and glutamate. The HisH subunit catalyzes the hydrolysis of glutamine to glutamate and ammonia as part of the synthesis of IGP and AICAR. The resulting ammonia molecule is channeled to the active site of HisF. The chain is Imidazole glycerol phosphate synthase subunit HisH from Dehalococcoides mccartyi (strain ATCC BAA-2266 / KCTC 15142 / 195) (Dehalococcoides ethenogenes (strain 195)).